We begin with the raw amino-acid sequence, 109 residues long: Phosphoribosyl-ATP pyrophosphatase (109 aa).

This sequence belongs to the PRA-PH family.

The protein localises to the cytoplasm. It catalyses the reaction 1-(5-phospho-beta-D-ribosyl)-ATP + H2O = 1-(5-phospho-beta-D-ribosyl)-5'-AMP + diphosphate + H(+). The protein operates within amino-acid biosynthesis; L-histidine biosynthesis; L-histidine from 5-phospho-alpha-D-ribose 1-diphosphate: step 2/9. The chain is Phosphoribosyl-ATP pyrophosphatase from Azorhizobium caulinodans (strain ATCC 43989 / DSM 5975 / JCM 20966 / LMG 6465 / NBRC 14845 / NCIMB 13405 / ORS 571).